A 152-amino-acid chain; its full sequence is Small ribosomal subunit protein uS13 (152 aa).

The protein belongs to the universal ribosomal protein uS13 family.

It is found in the cytoplasm. Functionally, located at the top of the head of the 40S subunit, it contacts several helices of the 18S rRNA. The protein is Small ribosomal subunit protein uS13 (RPS18) of Argopecten irradians (Bay scallop).